A 110-amino-acid chain; its full sequence is Small ribosomal subunit protein eS25 (110 aa).

The tract at residues 1–37 (MGGASKKPISTMEKRLKKEAEKQQKAEEKKKGPSKTG) is disordered. Over residues 12 to 37 (MEKRLKKEAEKQQKAEEKKKGPSKTG) the composition is skewed to basic and acidic residues.

It belongs to the eukaryotic ribosomal protein eS25 family.

This Saccharolobus solfataricus (strain ATCC 35092 / DSM 1617 / JCM 11322 / P2) (Sulfolobus solfataricus) protein is Small ribosomal subunit protein eS25 (rps25e).